The following is a 416-amino-acid chain: Phosphoglycerate kinase (416 aa).

Val23, Asp24, Phe25, Asn26, Gln38, Arg39, Ser62, His63, Gly65, Arg66, Leu121, Arg122, His169, and Arg170 together coordinate (2R)-3-phosphoglycerate. Position 213 (Gly213) interacts with ADP. Residue Gly213 participates in CDP binding. AMP-binding residues include Ala214 and Lys215. Residue Ala214 participates in ATP binding. A Mg(2+)-binding site is contributed by Ala214. Position 218 (Asp218) interacts with CDP. Asp218 serves as a coordination point for Mg(2+). Position 219 (Lys219) interacts with AMP. Lys219 provides a ligand contact to ATP. Residue Gly237 participates in ADP binding. Gly237 is a CDP binding site. AMP is bound by residues Gly238 and Gly312. Residues Gly238 and Gly312 each contribute to the ATP site. Gly337, Ala339, and Phe342 together coordinate CDP. Phe342 contributes to the ADP binding site. Residue Glu343 coordinates AMP. 3 residues coordinate ATP: Glu343, Asp374, and Thr375. Position 374 (Asp374) interacts with Mg(2+).

The protein belongs to the phosphoglycerate kinase family. Monomer. Requires Mg(2+) as cofactor.

It localises to the cytoplasm. The protein localises to the mitochondrion. The enzyme catalyses (2R)-3-phosphoglycerate + ATP = (2R)-3-phospho-glyceroyl phosphate + ADP. The protein operates within carbohydrate degradation; glycolysis; pyruvate from D-glyceraldehyde 3-phosphate: step 2/5. In terms of biological role, catalyzes one of the two ATP producing reactions in the glycolytic pathway via the reversible conversion of 1,3-diphosphoglycerate to 3-phosphoglycerate. Both L- and D- forms of purine and pyrimidine nucleotides can be used as substrates, but the activity is much lower on pyrimidines. Negatively regulates the biosynthesis of acetyl-CoA from pyruvate in the mitochondrion. The sequence is that of Phosphoglycerate kinase (PGK) from Funneliformis mosseae (Endomycorrhizal fungus).